The sequence spans 130 residues: Large ribosomal subunit protein bL12 (130 aa).

The protein belongs to the bacterial ribosomal protein bL12 family. Homodimer. Part of the ribosomal stalk of the 50S ribosomal subunit. Forms a multimeric L10(L12)X complex, where L10 forms an elongated spine to which 2 to 4 L12 dimers bind in a sequential fashion. Binds GTP-bound translation factors.

Functionally, forms part of the ribosomal stalk which helps the ribosome interact with GTP-bound translation factors. Is thus essential for accurate translation. In Mycolicibacterium gilvum (strain PYR-GCK) (Mycobacterium gilvum (strain PYR-GCK)), this protein is Large ribosomal subunit protein bL12.